The following is a 201-amino-acid chain: Small ribosomal subunit protein uS4 (201 aa).

The S4 RNA-binding domain maps to 93–153 (ARLDNVVYRM…EKSKSLEAID (61 aa)).

This sequence belongs to the universal ribosomal protein uS4 family. In terms of assembly, part of the 30S ribosomal subunit. Contacts protein S5. The interaction surface between S4 and S5 is involved in control of translational fidelity.

In terms of biological role, one of the primary rRNA binding proteins, it binds directly to 16S rRNA where it nucleates assembly of the body of the 30S subunit. Its function is as follows. With S5 and S12 plays an important role in translational accuracy. The polypeptide is Small ribosomal subunit protein uS4 (Flavobacterium psychrophilum (strain ATCC 49511 / DSM 21280 / CIP 103535 / JIP02/86)).